Here is a 91-residue protein sequence, read N- to C-terminus: DNA-directed RNA polymerase subunit omega (91 aa).

The protein belongs to the RNA polymerase subunit omega family. In terms of assembly, the RNAP catalytic core consists of 2 alpha, 1 beta, 1 beta' and 1 omega subunit. When a sigma factor is associated with the core the holoenzyme is formed, which can initiate transcription.

It catalyses the reaction RNA(n) + a ribonucleoside 5'-triphosphate = RNA(n+1) + diphosphate. In terms of biological role, promotes RNA polymerase assembly. Latches the N- and C-terminal regions of the beta' subunit thereby facilitating its interaction with the beta and alpha subunits. This chain is DNA-directed RNA polymerase subunit omega, found in Pectobacterium atrosepticum (strain SCRI 1043 / ATCC BAA-672) (Erwinia carotovora subsp. atroseptica).